We begin with the raw amino-acid sequence, 351 residues long: Peptide chain release factor 1 (351 aa).

Residue Gln233 is modified to N5-methylglutamine.

Belongs to the prokaryotic/mitochondrial release factor family. Post-translationally, methylated by PrmC. Methylation increases the termination efficiency of RF1.

The protein localises to the cytoplasm. In terms of biological role, peptide chain release factor 1 directs the termination of translation in response to the peptide chain termination codons UAG and UAA. This is Peptide chain release factor 1 (prfA) from Treponema pallidum (strain Nichols).